The chain runs to 194 residues: Crossover junction endodeoxyribonuclease RuvC (194 aa).

Active-site residues include Asp7, Glu68, and Asp141. Mg(2+)-binding residues include Asp7, Glu68, and Asp141.

Belongs to the RuvC family. In terms of assembly, homodimer which binds Holliday junction (HJ) DNA. The HJ becomes 2-fold symmetrical on binding to RuvC with unstacked arms; it has a different conformation from HJ DNA in complex with RuvA. In the full resolvosome a probable DNA-RuvA(4)-RuvB(12)-RuvC(2) complex forms which resolves the HJ. The cofactor is Mg(2+).

Its subcellular location is the cytoplasm. The catalysed reaction is Endonucleolytic cleavage at a junction such as a reciprocal single-stranded crossover between two homologous DNA duplexes (Holliday junction).. In terms of biological role, the RuvA-RuvB-RuvC complex processes Holliday junction (HJ) DNA during genetic recombination and DNA repair. Endonuclease that resolves HJ intermediates. Cleaves cruciform DNA by making single-stranded nicks across the HJ at symmetrical positions within the homologous arms, yielding a 5'-phosphate and a 3'-hydroxyl group; requires a central core of homology in the junction. The consensus cleavage sequence is 5'-(A/T)TT(C/G)-3'. Cleavage occurs on the 3'-side of the TT dinucleotide at the point of strand exchange. HJ branch migration catalyzed by RuvA-RuvB allows RuvC to scan DNA until it finds its consensus sequence, where it cleaves and resolves the cruciform DNA. This Bifidobacterium longum (strain DJO10A) protein is Crossover junction endodeoxyribonuclease RuvC.